An 860-amino-acid chain; its full sequence is Eukaryotic translation initiation factor 3 subunit C (860 aa).

Positions 1–79 (MSSRFFHGGS…ESDEEEDRVT (79 aa)) are disordered. 2 stretches are compositionally biased toward acidic residues: residues 16-53 (SSDEEELYSDRDEEEVSDEEEETTSEEESSEEESDDEA) and 67-76 (DLDESDEEED). The 175-residue stretch at 598-772 (FHMHINLELL…NAIVFRKGVE (175 aa)) folds into the PCI domain. The interval 808–860 (AFQRDQGPGGRLGRGQGRGGQRTAGGRPPIGGQQRRPGGQQFSGGALGGAIKA) is disordered. The segment covering 814–830 (GPGGRLGRGQGRGGQRT) has biased composition (gly residues). The span at 831–847 (AGGRPPIGGQQRRPGGQ) shows a compositional bias: low complexity. Over residues 848-860 (QFSGGALGGAIKA) the composition is skewed to gly residues.

Belongs to the eIF-3 subunit C family. Component of the eukaryotic translation initiation factor 3 (eIF-3) complex.

The protein localises to the cytoplasm. Functionally, component of the eukaryotic translation initiation factor 3 (eIF-3) complex, which is involved in protein synthesis of a specialized repertoire of mRNAs and, together with other initiation factors, stimulates binding of mRNA and methionyl-tRNAi to the 40S ribosome. The eIF-3 complex specifically targets and initiates translation of a subset of mRNAs involved in cell proliferation. In Coccidioides immitis (strain RS) (Valley fever fungus), this protein is Eukaryotic translation initiation factor 3 subunit C.